A 214-amino-acid chain; its full sequence is Clavatol biosynthesis cluster protein B (214 aa).

The N-terminal stretch at 1–17 is a signal peptide; it reads MAALSFQCLCVASAVRA. N-linked (GlcNAc...) asparagine glycans are attached at residues asparagine 103 and asparagine 204.

It functions in the pathway secondary metabolite biosynthesis. In terms of biological role, part of the cla gene cluster that produces clavatol and ortho-quinone methide. The clavatol biosynthesis cluster cla and the terrestric acid cluster tra are both involved in the production of peniphenones and penilactones. The non-reducing PKS claF is responsible for the formation of clavatol from successive condensations of 3 malonyl-CoA units, presumably with a simple acetyl-CoA starter unit, and 2 methylation steps. The esterase claE probably collaborates with claF by catalyzing the hydrolysis of ACP-bound acyl intermediates to free the ACP from stalled intermediates. The clavatol oxidase claD then converts clavatol to hydroxyclavatol. Spontaneous dehydration of hydroxyclavatol leads to the accumulation of the highly active ortho-quinone methide. On the other hand, the PKS-NRPS hybrid traA is involved in the formation of crustosic acid, with the help of traB and traD. The polyketide synthase module (PKS) of traA is responsible for the synthesis of the polyketide backbone via the condensation of an acetyl-CoA starter unit with 3 malonyl-CoA units. The downstream nonribosomal peptide synthetase (NRPS) module then amidates the carboxyl end of the polyketide with L-malic acid. Because traA lacks a designated enoylreductase (ER) domain, the required activity is provided the enoyl reductase traG. Crustosic acid undergoes decarboxylation and isomerization to the terrestric acid, catalyzed by the 2-oxoglutarate-dependent dioxygenase traH. Both acids are further converted to the 2 gamma-butyrolactones (R)-5-methyltetronic acid and (S)-5-carboxylmethyltetronic acid, with involvement of the cytochrome P450 monooxygenase claJ. Spontaneous addition of the methide to these gamma-butyrolactones leads to peniphenone D and penilactone D, which undergo again stereospecific attacking by methide to give penilactones A and B. The function of claB has not been investigated yet. The chain is Clavatol biosynthesis cluster protein B from Penicillium crustosum (Blue mold fungus).